Consider the following 260-residue polypeptide: 3-alpha-(or 20-beta)-hydroxysteroid dehydrogenase (260 aa).

Positions 17, 19, 38, 61, 62, 88, 153, 157, 186, 188, and 191 each coordinate NAD(+). The active-site Proton acceptor is tyrosine 153.

Belongs to the short-chain dehydrogenases/reductases (SDR) family. As to quaternary structure, homotetramer.

The enzyme catalyses androstan-3alpha,17beta-diol + NAD(+) = 17beta-hydroxyandrostanone + NADH + H(+). It functions in the pathway lipid metabolism; steroid degradation. Functionally, probably involved in steroid metabolism. The chain is 3-alpha-(or 20-beta)-hydroxysteroid dehydrogenase (fabG3) from Mycobacterium bovis (strain ATCC BAA-935 / AF2122/97).